A 494-amino-acid chain; its full sequence is uncharacterized protein (494 aa).

One can recognise a 2Fe-2S ferredoxin-type domain in the interval 4–82 (FTITVKKTEG…NMIIEPLEGF (79 aa)). C46, C51, C54, and C66 together coordinate [2Fe-2S] cluster. 2 consecutive 4Fe-4S ferredoxin-type domains span residues 127–157 (DLKD…NYPG) and 178–208 (EKEA…IVHN). The [4Fe-4S] cluster site is built by C137, C140, C143, C147, C189, C192, C195, and C199.

The protein belongs to the succinate dehydrogenase/fumarate reductase iron-sulfur protein family.

This is an uncharacterized protein from Methanococcus maripaludis (strain DSM 14266 / JCM 13030 / NBRC 101832 / S2 / LL).